The chain runs to 350 residues: Ookinete surface protein PIMMS43 (350 aa).

A signal peptide spans 1-24; sequence MIKLCTFLSLFLIFFFLNLNAING. A helical membrane pass occupies residues 330 to 350; it reads NSIASKLMSVFVFIAVIIYIL.

As to quaternary structure, forms multimers, perhaps with an unknown protein(s).

The protein resides in the membrane. Its function is as follows. Involved in ookinete evasion of the mosquito complement-like response, oocyst maturation, sporozoite development and infectivity. This is Ookinete surface protein PIMMS43 from Plasmodium berghei (strain Anka).